We begin with the raw amino-acid sequence, 334 residues long: Putative carboxypeptidase VC_A0337 (334 aa).

S112 functions as the Nucleophile in the catalytic mechanism. Active-site charge relay system residues include E234 and H302.

It belongs to the peptidase S66 family.

The protein is Putative carboxypeptidase VC_A0337 of Vibrio cholerae serotype O1 (strain ATCC 39315 / El Tor Inaba N16961).